The chain runs to 1025 residues: Multidrug resistance protein MdtC (1025 aa).

12 helical membrane passes run 3–23 (FFAL…AITL), 333–353 (EVEQ…FLFL), 360–380 (IIPA…MYLC), 387–407 (LSLM…IVVL), 431–451 (VGFT…PLLL), 463–483 (FAVT…TLTP), 528–548 (LVGM…ISIP), 853–873 (VILI…LYES), 875–895 (VHPL…LLAL), 897–917 (LFNA…IGIV), 953–973 (PIMM…LSGG), and 984–1004 (ITIV…TPVV).

It belongs to the resistance-nodulation-cell division (RND) (TC 2.A.6) family. MdtC subfamily. As to quaternary structure, part of a tripartite efflux system composed of MdtA, MdtB and MdtC. MdtC forms a heteromultimer with MdtB.

The protein localises to the cell inner membrane. In terms of biological role, the MdtABC tripartite complex confers resistance against novobiocin and deoxycholate. In Escherichia coli O157:H7 (strain EC4115 / EHEC), this protein is Multidrug resistance protein MdtC.